The chain runs to 589 residues: Cytochrome P450 monooxygenase TRI13 (589 aa).

The N-terminal stretch at 1–21 (MFLSLCLMVLALYLLYKWALP) is a signal peptide. 4 N-linked (GlcNAc...) asparagine glycosylation sites follow: Asn-52, Asn-219, Asn-243, and Asn-366. Cys-531 is a heme binding site.

The protein belongs to the cytochrome P450 family. The cofactor is heme.

It functions in the pathway sesquiterpene biosynthesis; trichothecene biosynthesis. Functionally, cytochrome P450 monooxygenase; part of the core gene cluster that mediates the biosynthesis of trichothecenes, a very large family of chemically related bicyclic sesquiterpene compounds acting as mycotoxins, including T2-toxin. The biosynthesis of trichothecenes begins with the cyclization of farnesyl diphosphate to trichodiene and is catalyzed by the trichodiene synthase TRI5. Trichodiene undergoes a series of oxygenations catalyzed by the cytochrome P450 monooxygenase TRI4. TRI4 controls the addition of four oxygens at C-2, C-3, C-11, and the C-12, C-13-epoxide to form the intermediate isotrichotriol. Isotrichotriol then undergoes a non-enzymatic isomerization and cyclization to form isotrichodermol. During this process, the oxygen at the C-2 position becomes the pyran ring oxygen and the hydroxyl group at C-11 is lost. More complex type A trichothecenes are built by modifying isotrichodermol through a series of paired hydroxylation and acetylation or acylation steps. Isotrichodermol is converted to isotrichodermin by the acetyltransferase TRI101. TRI101 encodes a C-3 transacetylase that acts as a self-protection or resistance factor during biosynthesis and that the presence of a free C-3 hydroxyl group is a key component of Fusarium trichothecene phytotoxicity. A second hydroxyl group is added to C-15 by the trichothecene C-15 hydroxylase TRI11, producing 15-decalonectrin, which is then acetylated by TRI3, producing calonectrin. A third hydroxyl group is added at C-4 by the cytochrome P450 monooxygenase TRI13, converting calonectrin to 3,15-diacetoxyspirpenol, which is subsequently acetylated by the acetyltransferase TRI7. A fourth hydroxyl group is added to C-8 by the cytochrome P450 monooxygenase TRI1, followed by the addition of an isovaleryl moiety by TRI16. Finally, the acetyl group is removed from the C-3 position by the trichothecene C-3 esterase TRI8 to produce T-2 toxin. The polypeptide is Cytochrome P450 monooxygenase TRI13 (Fusarium sporotrichioides).